We begin with the raw amino-acid sequence, 352 residues long: Holliday junction branch migration complex subunit RuvB (352 aa).

The tract at residues 5-191 (TDDFSEQRII…FGIVARLEFY (187 aa)) is large ATPase domain (RuvB-L). ATP-binding positions include Leu-30, Arg-31, Gly-72, Lys-75, Thr-76, Thr-77, 138–140 (EDY), Arg-181, Tyr-191, and Arg-228. Thr-76 lines the Mg(2+) pocket. A small ATPAse domain (RuvB-S) region spans residues 192–262 (TPLELTKIVT…MADAALVMLD (71 aa)). Positions 265–352 (PVGFDLMDRK…GPNGDLWAGQ (88 aa)) are head domain (RuvB-H). DNA-binding residues include Arg-301, Arg-320, and Arg-325.

Belongs to the RuvB family. In terms of assembly, homohexamer. Forms an RuvA(8)-RuvB(12)-Holliday junction (HJ) complex. HJ DNA is sandwiched between 2 RuvA tetramers; dsDNA enters through RuvA and exits via RuvB. An RuvB hexamer assembles on each DNA strand where it exits the tetramer. Each RuvB hexamer is contacted by two RuvA subunits (via domain III) on 2 adjacent RuvB subunits; this complex drives branch migration. In the full resolvosome a probable DNA-RuvA(4)-RuvB(12)-RuvC(2) complex forms which resolves the HJ.

It localises to the cytoplasm. The enzyme catalyses ATP + H2O = ADP + phosphate + H(+). The RuvA-RuvB-RuvC complex processes Holliday junction (HJ) DNA during genetic recombination and DNA repair, while the RuvA-RuvB complex plays an important role in the rescue of blocked DNA replication forks via replication fork reversal (RFR). RuvA specifically binds to HJ cruciform DNA, conferring on it an open structure. The RuvB hexamer acts as an ATP-dependent pump, pulling dsDNA into and through the RuvAB complex. RuvB forms 2 homohexamers on either side of HJ DNA bound by 1 or 2 RuvA tetramers; 4 subunits per hexamer contact DNA at a time. Coordinated motions by a converter formed by DNA-disengaged RuvB subunits stimulates ATP hydrolysis and nucleotide exchange. Immobilization of the converter enables RuvB to convert the ATP-contained energy into a lever motion, pulling 2 nucleotides of DNA out of the RuvA tetramer per ATP hydrolyzed, thus driving DNA branch migration. The RuvB motors rotate together with the DNA substrate, which together with the progressing nucleotide cycle form the mechanistic basis for DNA recombination by continuous HJ branch migration. Branch migration allows RuvC to scan DNA until it finds its consensus sequence, where it cleaves and resolves cruciform DNA. This chain is Holliday junction branch migration complex subunit RuvB, found in Janthinobacterium sp. (strain Marseille) (Minibacterium massiliensis).